A 287-amino-acid polypeptide reads, in one-letter code: Bifunctional protein FolD (287 aa).

Residues 160–162, Ser-189, and Ile-230 contribute to the NADP(+) site; that span reads GRS.

The protein belongs to the tetrahydrofolate dehydrogenase/cyclohydrolase family. In terms of assembly, homodimer.

It carries out the reaction (6R)-5,10-methylene-5,6,7,8-tetrahydrofolate + NADP(+) = (6R)-5,10-methenyltetrahydrofolate + NADPH. It catalyses the reaction (6R)-5,10-methenyltetrahydrofolate + H2O = (6R)-10-formyltetrahydrofolate + H(+). It functions in the pathway one-carbon metabolism; tetrahydrofolate interconversion. Catalyzes the oxidation of 5,10-methylenetetrahydrofolate to 5,10-methenyltetrahydrofolate and then the hydrolysis of 5,10-methenyltetrahydrofolate to 10-formyltetrahydrofolate. In Chlamydia felis (strain Fe/C-56) (Chlamydophila felis), this protein is Bifunctional protein FolD.